The chain runs to 462 residues: Sodium-coupled neutral amino acid transporter 7 (462 aa).

Residue Ser-28 is modified to Phosphoserine. The next 11 helical transmembrane spans lie at 56–76, 82–102, 130–150, 178–198, 205–225, 239–259, 282–302, 319–339, 371–391, 395–415, and 428–448; these read AIFI…PAAF, VAAG…GLVI, LCEV…LIII, FTIS…REIG, FLSV…YIWP, ASWM…QCHV, AAMV…FLTF, MAVA…YPIL, VLQT…IPDI, ISVI…LCLI, and ASWW…AFIF.

It belongs to the amino acid/polyamine transporter 2 family. Interacts with the mTORC1 complex; this interaction mediates the recruitment of mTORC1 to the lysosome and its subsequent activation.

Its subcellular location is the lysosome membrane. The protein localises to the cell projection. The protein resides in the axon. It catalyses the reaction L-asparagine(in) + Na(+)(in) = L-asparagine(out) + Na(+)(out). It carries out the reaction L-glutamine(in) + Na(+)(in) = L-glutamine(out) + Na(+)(out). In terms of biological role, symporter that selectively cotransports sodium ions and amino acids, such as L-glutamine and L-asparagine from the lysosome into the cytoplasm and may participates in mTORC1 activation. The transport activity requires an acidic lysosomal lumen. The protein is Sodium-coupled neutral amino acid transporter 7 of Homo sapiens (Human).